Here is a 199-residue protein sequence, read N- to C-terminus: Recombination protein RecR (199 aa).

The segment at 58-73 (CRTCFSLSDQPECRIC) adopts a C4-type zinc-finger fold. The Toprim domain occupies 81–176 (SIICVVEKPT…NVTRIASGVP (96 aa)).

This sequence belongs to the RecR family.

Its function is as follows. May play a role in DNA repair. It seems to be involved in an RecBC-independent recombinational process of DNA repair. It may act with RecF and RecO. The sequence is that of Recombination protein RecR from Desulforapulum autotrophicum (strain ATCC 43914 / DSM 3382 / VKM B-1955 / HRM2) (Desulfobacterium autotrophicum).